Consider the following 304-residue polypeptide: Protease HtpX homolog (304 aa).

2 helical membrane passes run 14–34 (VFII…IGII) and 39–59 (YLNG…IMVM). His-144 contributes to the Zn(2+) binding site. Glu-145 is a catalytic residue. His-148 is a binding site for Zn(2+). 2 helical membrane passes run 159–179 (IAIA…RLIF) and 202–222 (IIIY…ATAI). Glu-231 lines the Zn(2+) pocket. Residues 275-304 (SSPLKSKKDKPGLFDSHPPISSRIERLENM) form a disordered region.

This sequence belongs to the peptidase M48B family. Zn(2+) is required as a cofactor.

The protein localises to the cell membrane. The protein is Protease HtpX homolog of Listeria innocua serovar 6a (strain ATCC BAA-680 / CLIP 11262).